Reading from the N-terminus, the 734-residue chain is Photosystem I P700 chlorophyll a apoprotein A2 (734 aa).

The next 8 membrane-spanning stretches (helical) occupy residues 46-69 (IFAS…FHVA), 135-158 (LYTG…LHLQ), 175-199 (LNHH…HVAI), 273-291 (IAHH…GHMY), 330-353 (LHFQ…QHMY), 369-395 (AALY…IFFI), 417-439 (AIIS…LYVH), and 517-535 (FLVH…SIPV). Cys559 and Cys568 together coordinate [4Fe-4S] cluster. Helical transmembrane passes span 575 to 596 (AFYL…YWHW) and 643 to 665 (LSVW…MFLI). Chlorophyll a is bound by residues His654, Met662, and Tyr670. Residue Trp671 coordinates phylloquinone. Residues 707–727 (LVGLAHFSVGYIFTYAAFLIA) form a helical membrane-spanning segment.

This sequence belongs to the PsaA/PsaB family. In terms of assembly, the PsaA/B heterodimer binds the P700 chlorophyll special pair and subsequent electron acceptors. PSI consists of a core antenna complex that captures photons, and an electron transfer chain that converts photonic excitation into a charge separation. The eukaryotic PSI reaction center is composed of at least 11 subunits. P700 is a chlorophyll a/chlorophyll a' dimer, A0 is one or more chlorophyll a, A1 is one or both phylloquinones and FX is a shared 4Fe-4S iron-sulfur center. is required as a cofactor.

Its subcellular location is the plastid. It is found in the chloroplast thylakoid membrane. It catalyses the reaction reduced [plastocyanin] + hnu + oxidized [2Fe-2S]-[ferredoxin] = oxidized [plastocyanin] + reduced [2Fe-2S]-[ferredoxin]. Functionally, psaA and PsaB bind P700, the primary electron donor of photosystem I (PSI), as well as the electron acceptors A0, A1 and FX. PSI is a plastocyanin-ferredoxin oxidoreductase, converting photonic excitation into a charge separation, which transfers an electron from the donor P700 chlorophyll pair to the spectroscopically characterized acceptors A0, A1, FX, FA and FB in turn. Oxidized P700 is reduced on the lumenal side of the thylakoid membrane by plastocyanin. This chain is Photosystem I P700 chlorophyll a apoprotein A2, found in Angiopteris evecta (Mule's foot fern).